The primary structure comprises 197 residues: Alkyl hydroperoxide reductase C (197 aa).

The Thioredoxin domain occupies 2-163 (VLVTQNAPNF…MIRMVDALDF (162 aa)). Residue Cys-50 is the Cysteine sulfenic acid (-SOH) intermediate of the active site.

It belongs to the peroxiredoxin family. AhpC/Prx1 subfamily. Homodimer; disulfide-linked, upon oxidation. 5 homodimers assemble to form a ring-like decamer.

It localises to the cytoplasm. The catalysed reaction is a hydroperoxide + NADH + H(+) = an alcohol + NAD(+) + H2O. Thiol-specific peroxidase that catalyzes the reduction of hydrogen peroxide and organic hydroperoxides to water and alcohols, respectively. Plays a role in cell protection against oxidative stress by detoxifying peroxides. The polypeptide is Alkyl hydroperoxide reductase C (Buchnera aphidicola subsp. Acyrthosiphon pisum (strain APS) (Acyrthosiphon pisum symbiotic bacterium)).